The sequence spans 285 residues: 2-methoxy-6-polyprenyl-1,4-benzoquinol methylase, mitochondrial (285 aa).

Residues 1 to 30 (MKGATNLFKSMRKPTNVGNFRQFSVNQVNS) constitute a mitochondrion transit peptide. S-adenosyl-L-methionine-binding positions include Thr-106, Asp-126, 156–157 (NA), and Ser-173.

The protein belongs to the class I-like SAM-binding methyltransferase superfamily. MenG/UbiE family. As to quaternary structure, component of a multi-subunit COQ enzyme complex.

Its subcellular location is the mitochondrion inner membrane. It catalyses the reaction a 2-methoxy-6-(all-trans-polyprenyl)benzene-1,4-diol + S-adenosyl-L-methionine = a 5-methoxy-2-methyl-3-(all-trans-polyprenyl)benzene-1,4-diol + S-adenosyl-L-homocysteine + H(+). Its pathway is cofactor biosynthesis; ubiquinone biosynthesis. In terms of biological role, methyltransferase required for the conversion of 2-polyprenyl-6-methoxy-1,4-benzoquinol (DDMQH2) to 2-polyprenyl-3-methyl-6-methoxy-1,4-benzoquinol (DMQH2). This chain is 2-methoxy-6-polyprenyl-1,4-benzoquinol methylase, mitochondrial, found in Caenorhabditis elegans.